The chain runs to 504 residues: Anaerobic nitric oxide reductase transcription regulator NorR (504 aa).

Asp57 carries the 4-aspartylphosphate modification. A Sigma-54 factor interaction domain is found at 187–416 (MIGLSPGMTQ…LEHAIHRAVV (230 aa)). ATP contacts are provided by residues 215–222 (GETGTGKE) and 278–287 (ADNGTLFLDE). The segment at residues 479–498 (WAACARMLETDVANLHRLAK) is a DNA-binding region (H-T-H motif).

It functions in the pathway nitrogen metabolism; nitric oxide reduction. Required for the expression of anaerobic nitric oxide (NO) reductase, acts as a transcriptional activator for at least the norVW operon. Activation also requires sigma-54. This is Anaerobic nitric oxide reductase transcription regulator NorR from Escherichia coli (strain K12 / MC4100 / BW2952).